Reading from the N-terminus, the 345-residue chain is Transcription initiation factor IIB (345 aa).

The TFIIB-type zinc-finger motif lies at 8 to 40 (VGRNCPHCSAVDSLQTDDVMGEVACTACALVVA). C12, C15, C32, and C35 together coordinate Zn(2+). Disordered regions lie at residues 59–89 (DVDH…HMSS) and 318–345 (PTAG…REET). Residues 71-83 (TAATSAAGSLSAA) are compositionally biased toward low complexity.

The protein belongs to the TFIIB family. As to quaternary structure, monomer. Interacts with RNA polymerase II subunits RPB1 and RPB2. Interacts with TBP; the interaction is direct.

The protein resides in the nucleus. Specifically binds to the promoter of the spliced leader (SL) RNA gene and thus is essential for SLRNA transcription. In Trypanosoma brucei brucei, this protein is Transcription initiation factor IIB.